The following is a 292-amino-acid chain: MFKKYIFILLLLVTSIVKAENIEVNNLDKIKQDFEENYIKNYLPQDLLVVIDLDKILFKPLLSLGEQIDKDVYAKLAPTLQKISKNPKNIYIDQLILTSDKYKKELLDSNFPNFVSDIRNKNIPIIAVNGGFTGNFNNIPKFEIWIADYLKKNFNIDFSNSFPKNNYIIFNNLKSFSNTYPVFYKGILTSNNISGAELMINFFVQMNFMPKVLIMVSGSTELLSSMEAQLANYSSSVLFIGYYYNNQDSRDNNANYNVIINDLTNQMNNIKRNNPPLKTNNAKSKNPYDQSK.

The signal sequence occupies residues 1–19 (MFKKYIFILLLLVTSIVKA). The disordered stretch occupies residues 271–292 (KRNNPPLKTNNAKSKNPYDQSK).

This is an uncharacterized protein from Rickettsia bellii (strain RML369-C).